We begin with the raw amino-acid sequence, 251 residues long: Triosephosphate isomerase (251 aa).

Position 9-11 (9-11 (NWK)) interacts with substrate. The active-site Electrophile is H96. E168 functions as the Proton acceptor in the catalytic mechanism. Substrate contacts are provided by residues G174, S214, and 235–236 (GG).

It belongs to the triosephosphate isomerase family. Homodimer.

It is found in the cytoplasm. It carries out the reaction D-glyceraldehyde 3-phosphate = dihydroxyacetone phosphate. The protein operates within carbohydrate biosynthesis; gluconeogenesis. Its pathway is carbohydrate degradation; glycolysis; D-glyceraldehyde 3-phosphate from glycerone phosphate: step 1/1. Functionally, involved in the gluconeogenesis. Catalyzes stereospecifically the conversion of dihydroxyacetone phosphate (DHAP) to D-glyceraldehyde-3-phosphate (G3P). This Porphyromonas gingivalis (strain ATCC 33277 / DSM 20709 / CIP 103683 / JCM 12257 / NCTC 11834 / 2561) protein is Triosephosphate isomerase.